We begin with the raw amino-acid sequence, 523 residues long: Cytoplasmic dynein 1 light intermediate chain 1 (523 aa).

The disordered stretch occupies residues 1–25; the sequence is MAAVGRVGSFGSSPPGLSSTYTGGP. Residues 9–19 show a composition bias toward low complexity; sequence SFGSSPPGLSS. 74–81 is a binding site for ATP; that stretch reads GEDGAGKT. Position 207 is a phosphoserine (Ser-207). Thr-213 bears the Phosphothreonine mark. Disordered stretches follow at residues 387–434 and 456–523; these read PPTA…DPNM and TGSP…GEAS. Ser-398 and Ser-405 each carry phosphoserine. Residue Thr-408 is modified to Phosphothreonine. A phosphoserine mark is found at Ser-412, Ser-419, Ser-421, and Ser-427. A compositionally biased stretch (low complexity) spans 412–421; the sequence is SVSSNVASVS. The segment covering 458–478 has biased composition (gly residues); that stretch reads SPGGPGVSGGSPAGGAGGGSS. Ser-487 carries the phosphoserine modification. A compositionally biased stretch (basic and acidic residues) spans 493–503; it reads LDVHAELDRIT. Residues 506-523 are compositionally biased toward low complexity; sequence PVTVSPTTPTSPTEGEAS. Residue Ser-510 is modified to Phosphoserine. Residues Thr-512, Thr-513, and Thr-515 each carry the phosphothreonine modification. Residue Ser-516 is modified to Phosphoserine.

This sequence belongs to the dynein light intermediate chain family. As to quaternary structure, homodimer. The cytoplasmic dynein 1 complex consists of two catalytic heavy chains (HCs) and a number of non-catalytic subunits presented by intermediate chains (ICs), light intermediate chains (LICs) and light chains (LCs); the composition seems to vary in respect to the IC, LIC and LC composition. The heavy chain homodimer serves as a scaffold for the probable homodimeric assembly of the respective non-catalytic subunits. The ICs and LICs bind directly to the HC dimer and the LCs assemble on the IC dimer. Self-associates. Interacts with DYNC1H1; DYNC1LI1 and DYNC1LI2 bind mutually exclusive to DYNC1H1. Interacts with PCNT. Forms a complex with RAB11FIP3 and RAB11A1; the interaction between DYNC1LI1 and RAB11FIP3 is direct and induces DYNC1LI1 localization onto endosomal membrane; the complex regulates endocytic trafficking. Interacts with RUFY3. In terms of assembly, (Microbial infection) Interacts with human adenovirus 5 hexon protein; this interaction probably allows virus intracellular transport. Phosphorylated during mitosis but not in interphase.

It is found in the cytoplasm. The protein localises to the chromosome. The protein resides in the centromere. Its subcellular location is the kinetochore. It localises to the cytoskeleton. It is found in the spindle pole. The protein localises to the recycling endosome membrane. In terms of biological role, acts as one of several non-catalytic accessory components of the cytoplasmic dynein 1 complex that are thought to be involved in linking dynein to cargos and to adapter proteins that regulate dynein function. Cytoplasmic dynein 1 acts as a motor for the intracellular retrograde motility of vesicles and organelles along microtubules. May play a role in binding dynein to membranous organelles or chromosomes. Probably involved in the microtubule-dependent transport of pericentrin. Is required for progress through the spindle assembly checkpoint. The phosphorylated form appears to be involved in the selective removal of MAD1L1 and MAD1L2 but not BUB1B from kinetochores. Forms a functional Rab11/RAB11FIP3/dynein complex onto endosomal membrane that regulates the movement of peripheral sorting endosomes (SE) along microtubule tracks toward the microtubule organizing center/centrosome, generating the endosomal recycling compartment (ERC). This Homo sapiens (Human) protein is Cytoplasmic dynein 1 light intermediate chain 1 (DYNC1LI1).